We begin with the raw amino-acid sequence, 261 residues long: uncharacterized protein (261 aa).

A disordered region spans residues 1–22 (MGVADNEYISVPTGEPVQQQPQ). The next 3 membrane-spanning stretches (helical) occupy residues 92-112 (IIIL…ILGL), 122-142 (IVVM…IFLF), and 147-167 (INTI…LMNY).

The protein resides in the membrane. This is an uncharacterized protein from Dictyostelium discoideum (Social amoeba).